A 378-amino-acid chain; its full sequence is D-alanine--D-alanine ligase (378 aa).

The ATP-grasp domain occupies 149–374 (KVLLAAAGIP…YTDLITKLIE (226 aa)). 189-247 (EAGLQYPLFVKPSRAGSSFGVTKVEHEGDAAELAAAVYEASRHDWRILVEQGIDAREIE) is a binding site for ATP. Mg(2+) contacts are provided by D328, E341, and N343.

This sequence belongs to the D-alanine--D-alanine ligase family. Mg(2+) is required as a cofactor. Requires Mn(2+) as cofactor.

Its subcellular location is the cytoplasm. It carries out the reaction 2 D-alanine + ATP = D-alanyl-D-alanine + ADP + phosphate + H(+). Its pathway is cell wall biogenesis; peptidoglycan biosynthesis. Cell wall formation. The protein is D-alanine--D-alanine ligase of Bifidobacterium adolescentis (strain ATCC 15703 / DSM 20083 / NCTC 11814 / E194a).